Here is an 852-residue protein sequence, read N- to C-terminus: Transient receptor potential cation channel subfamily V member 4 (852 aa).

Over 1 to 455 (MADPEDPRDA…RDKWRKFGAV (455 aa)) the chain is Cytoplasmic. The interval 30–51 (VEDTPSPAEPSRGPPGAVDGKQ) is disordered. Residues Lys178, Lys183, Asn187, 222 to 225 (YRGQ), and Arg234 contribute to the ATP site. 2 ANK repeats span residues 223–252 (RGQTALHIAIERRCKHYVELLVEKGADVHA) and 270–299 (FGELPLSLAACTNQPHIVHYLTENGHKQAD). Residues 235–237 (RCK), 282–285 (NQPH), and Lys330 each bind a 1,2-diacyl-sn-glycero-3-phospho-(1D-myo-inositol-4,5-bisphosphate). The stretch at 355-387 (DGLSPLMMAAKTGKIGIFQHIIRREIADEDVRH) is one ANK 3 repeat. The chain crosses the membrane as a helical span at residues 456–476 (SFYISVVSYLCAMIIFTLIAY). Over 477–493 (YRPMEGPPPYPYTTTID) the chain is Extracellular. A helical transmembrane segment spans residues 494–520 (YLRLAGEIITLLTGILFFFSNIKDLFM). At 521–533 (KKCPGVNSFFIDG) the chain is on the cytoplasmic side. A helical transmembrane segment spans residues 534–554 (SFQLLYFIYSVLVIVTAGLYL). The Extracellular portion of the chain corresponds to 555 to 558 (GGVE). A helical membrane pass occupies residues 559–579 (AYLAVMVFALVLGWMNALYFT). Over 580-594 (RGLKLTGTYSIMIQK) the chain is Cytoplasmic. A helical membrane pass occupies residues 595-622 (ILFKDLFRFLLVYLLFMIGYASALVSLL). Residues 623–651 (NPCPSSESCSEDHSNCTLPTYPSCRDSQT) are Extracellular-facing. Positions 652–671 (FSTFLLDLFKLTIGMGDLEM) form an intramembrane region, pore-forming. The Selectivity filter signature appears at 665-668 (GMGD). Residue Asp668 coordinates Ca(2+). Residues 672-679 (LESAKYPG) are Extracellular-facing. The helical transmembrane segment at 680–708 (VFIILLVTYIILTFVLLLNMLIALMGETV) threads the bilayer. Residues 709–852 (GQVSKESKHI…RHGQTPSSPL (144 aa)) are Cytoplasmic-facing.

Belongs to the transient receptor (TC 1.A.4) family. TrpV subfamily. TRPV4 sub-subfamily. Homotetramer. Interacts with Ca(2+)-calmodulin.

Its subcellular location is the apical cell membrane. The protein localises to the cell junction. The protein resides in the adherens junction. It catalyses the reaction Ca(2+)(in) = Ca(2+)(out). ATP binding enhances channel sensitivity to agonists. Ca(2+)-calmodulin prevents the ATP-mediated increased sensitivity to agonists. In terms of biological role, non-selective calcium permeant cation channel involved in osmotic sensitivity and mechanosensitivity. Activation by exposure to hypotonicity within the physiological range exhibits an outward rectification. Also activated by phorbol esters. Channel activity seems to be regulated by a calmodulin-dependent mechanism. This Gallus gallus (Chicken) protein is Transient receptor potential cation channel subfamily V member 4 (TRPV4).